We begin with the raw amino-acid sequence, 236 residues long: tRNA (guanine-N(1)-)-methyltransferase (236 aa).

Residues Gly-116 and 136-141 (LGDFVL) contribute to the S-adenosyl-L-methionine site.

Belongs to the RNA methyltransferase TrmD family. In terms of assembly, homodimer.

The protein localises to the cytoplasm. It carries out the reaction guanosine(37) in tRNA + S-adenosyl-L-methionine = N(1)-methylguanosine(37) in tRNA + S-adenosyl-L-homocysteine + H(+). Specifically methylates guanosine-37 in various tRNAs. This Thiobacillus denitrificans (strain ATCC 25259 / T1) protein is tRNA (guanine-N(1)-)-methyltransferase.